A 395-amino-acid polypeptide reads, in one-letter code: General transcription factor IIH subunit 2 (395 aa).

In terms of domain architecture, VWFA spans 60–236; sequence HLYVVVDGSR…HYKELLTHHV (177 aa). Position 95 is a phosphotyrosine (tyrosine 95). The C4-type zinc finger occupies 291 to 308; sequence CPQCRAKYCELPVECKIC.

The protein belongs to the GTF2H2 family. In terms of assembly, component of the TFIID-containing RNA polymerase II pre-initiation complex that is composed of TBP and at least GTF2A1, GTF2A2, GTF2E1, GTF2E2, GTF2F1, GTF2H2, GTF2H3, GTF2H4, GTF2H5, GTF2B, TCEA1, ERCC2 and ERCC3. Component of the 7-subunit TFIIH core complex composed of XPB/ERCC3, XPD/ERCC2, GTF2H1, GTF2H2, GTF2H3, GTF2H4 and GTF2H5, which is active in NER. The core complex associates with the 3-subunit CDK-activating kinase (CAK) module composed of CCNH/cyclin H, CDK7 and MNAT1 to form the 10-subunit holoenzyme (holo-TFIIH) active in transcription. Interacts with XPB, XPD, GTF2H1 and GTF2H3. (Microbial infection) Interacts with varicella-zoster virus IE63 protein. In terms of tissue distribution, widely expressed, with higher expression in skeletal muscle.

The protein localises to the nucleus. Its function is as follows. Component of the general transcription and DNA repair factor IIH (TFIIH) core complex, which is involved in general and transcription-coupled nucleotide excision repair (NER) of damaged DNA and, when complexed to CAK, in RNA transcription by RNA polymerase II. In NER, TFIIH acts by opening DNA around the lesion to allow the excision of the damaged oligonucleotide and its replacement by a new DNA fragment. In transcription, TFIIH has an essential role in transcription initiation. When the pre-initiation complex (PIC) has been established, TFIIH is required for promoter opening and promoter escape. Phosphorylation of the C-terminal tail (CTD) of the largest subunit of RNA polymerase II by the kinase module CAK controls the initiation of transcription. The N-terminus of GTF2H2 interacts with and regulates XPD whereas an intact C-terminus is required for a successful escape of RNAP II form the promoter. This Homo sapiens (Human) protein is General transcription factor IIH subunit 2 (GTF2H2).